Reading from the N-terminus, the 487-residue chain is UPF0324 membrane protein NE0724 (487 aa).

The next 11 helical transmembrane spans lie at 19–38, 71–93, 100–119, 139–161, 181–200, 204–226, 269–291, 350–369, 389–411, 426–443, and 456–478; these read WAVWLGLIMFMASVSSLWGW, PALSLLVTYLVFTALTCLAAWSM, FFIGWTILFIMTWVIWIIGN, LSLGSGFSYLLALLVGLVIGNFF, AIVFLGIKIGVMSIEAAGFI, VMTGVAATFVAYMLFWPIVYALG, VSILVVIFAMFELIILPGFYTAI, IWIDMFIGVWAFVLALVWVY, FPKFVLGYLLVWFSYIMLASSGS, GPMRNMMFMLTFISIGII, and ALLYAIALFGIIAPIAYGVAWIF.

This sequence belongs to the UPF0324 family.

The protein resides in the cell membrane. This is UPF0324 membrane protein NE0724 from Nitrosomonas europaea (strain ATCC 19718 / CIP 103999 / KCTC 2705 / NBRC 14298).